The sequence spans 153 residues: MRCPFCGYEDSKVVDTRPTNEGKTIKRRRECLKCQKRFTTYEKIEKQPILVIKKDNRREEFDRNKILNGIIKACQKRPVSIEQMNKIVDEIENEIYNSMREEISSREIGEMVMEKLKKIDEISYVRFASVYRQFKDINTFIEELQKLLTEKIE.

The segment at Cys3–Cys34 is a zinc-finger region. One can recognise an ATP-cone domain in the interval Ile49 to Thr139.

The protein belongs to the NrdR family. Requires Zn(2+) as cofactor.

In terms of biological role, negatively regulates transcription of bacterial ribonucleotide reductase nrd genes and operons by binding to NrdR-boxes. The chain is Transcriptional repressor NrdR from Caldicellulosiruptor bescii (strain ATCC BAA-1888 / DSM 6725 / KCTC 15123 / Z-1320) (Anaerocellum thermophilum).